A 218-amino-acid chain; its full sequence is uncharacterized protein (218 aa).

The region spanning G4–G83 is the ACT domain.

This is an uncharacterized protein from Methanocaldococcus jannaschii (strain ATCC 43067 / DSM 2661 / JAL-1 / JCM 10045 / NBRC 100440) (Methanococcus jannaschii).